The following is a 467-amino-acid chain: Cysteine--tRNA ligase (467 aa).

A Zn(2+)-binding site is contributed by C28. Residues 30–40 (MTVYDYCHLGH) carry the 'HIGH' region motif. Zn(2+) contacts are provided by C209, H234, and E238. Positions 266-270 (KMSKS) match the 'KMSKS' region motif. K269 contacts ATP.

Belongs to the class-I aminoacyl-tRNA synthetase family. As to quaternary structure, monomer. Zn(2+) is required as a cofactor.

Its subcellular location is the cytoplasm. The catalysed reaction is tRNA(Cys) + L-cysteine + ATP = L-cysteinyl-tRNA(Cys) + AMP + diphosphate. In Hahella chejuensis (strain KCTC 2396), this protein is Cysteine--tRNA ligase.